The chain runs to 537 residues: Glutamyl-tRNA reductase, chloroplastic (537 aa).

The N-terminal 48 residues, Met-1 to Arg-48, are a transit peptide targeting the chloroplast. Substrate is bound by residues Thr-134 to Arg-137, Ser-194, Glu-199 to Gln-201, and Gln-205. Cys-135 acts as the Nucleophile in catalysis. Residue Gly-276 to Gly-281 coordinates NADP(+).

It belongs to the glutamyl-tRNA reductase family.

Its subcellular location is the plastid. The protein resides in the chloroplast. The catalysed reaction is (S)-4-amino-5-oxopentanoate + tRNA(Glu) + NADP(+) = L-glutamyl-tRNA(Glu) + NADPH + H(+). It functions in the pathway porphyrin-containing compound metabolism; protoporphyrin-IX biosynthesis; 5-aminolevulinate from L-glutamyl-tRNA(Glu): step 1/2. Its function is as follows. Catalyzes the NADPH-dependent reduction of glutamyl-tRNA(Glu) to glutamate 1-semialdehyde (GSA). This chain is Glutamyl-tRNA reductase, chloroplastic, found in Oryza sativa subsp. japonica (Rice).